The sequence spans 371 residues: Peptide chain release factor 2 (371 aa).

Position 252 is an N5-methylglutamine (Q252).

Belongs to the prokaryotic/mitochondrial release factor family. Methylated by PrmC. Methylation increases the termination efficiency of RF2.

The protein resides in the cytoplasm. Its function is as follows. Peptide chain release factor 2 directs the termination of translation in response to the peptide chain termination codons UGA and UAA. This chain is Peptide chain release factor 2, found in Staphylococcus epidermidis (strain ATCC 35984 / DSM 28319 / BCRC 17069 / CCUG 31568 / BM 3577 / RP62A).